A 179-amino-acid chain; its full sequence is Large ribosomal subunit protein uL6 (179 aa).

This sequence belongs to the universal ribosomal protein uL6 family. As to quaternary structure, part of the 50S ribosomal subunit.

Functionally, this protein binds to the 23S rRNA, and is important in its secondary structure. It is located near the subunit interface in the base of the L7/L12 stalk, and near the tRNA binding site of the peptidyltransferase center. The sequence is that of Large ribosomal subunit protein uL6 from Chlorobium luteolum (strain DSM 273 / BCRC 81028 / 2530) (Pelodictyon luteolum).